The chain runs to 209 residues: Immunoglobulin lambda-like polypeptide 1 (209 aa).

The first 30 residues, 1–30, serve as a signal peptide directing secretion; that stretch reads MKLRVGQTLGTIPRQCEVLLLLLLLGLVDG. Residues 93–104 form a j region region; the sequence is VFGGGTQLTILG. A c region region spans residues 105–209; the sequence is QPKSDPLVTL…EKSVSPAECS (105 aa). In terms of domain architecture, Ig-like C1-type spans 110–204; the sequence is PLVTLFLPSL…EGNTVEKSVS (95 aa). A disulfide bridge links C131 with C190.

Interacts with VPREB1A. Interacts with SYNV1/HRD1 (via N-terminus); this interaction leads to increased IGLL1 ubiquitination and degradation in pre-B cells, possibly through a lysosomal, not proteasomal, pathway. Selectively expressed in pre-B lymphocytes.

The protein resides in the endoplasmic reticulum. The protein localises to the secreted. Functionally, critical for B-cell development. This Mus musculus (Mouse) protein is Immunoglobulin lambda-like polypeptide 1 (Igll1).